A 375-amino-acid chain; its full sequence is MSDAKKLTGAGLRGQSAGETALSTVGVSGSGLTYRGYDVKDLAENATFEEVAYLILYGELPTTAQLAAYKTKLKGMRGLPQALKEVLERIPADAHPMDVMRTGCSMLGNLEAEHSFSEQSQIADRLLAAFPSIICYWYRFSHDGVRIDTETDDDQIGAHFLHLLHGKAPSALHTKVMDVSLILYAEHEFNASTFTARVCASTLSDMHSCVTGAIGSLRGPLHGGANEAAMELIQDMKDEADARDVLMGKLERKEKIMGFGHAIYRDSDPRNAIIKEWSEKLAADYGDDRLYRVSVACEALMWEQKKLFCNADFFHASAYHFMGIPTKLFTPIFVCSRVTGWTAHVMEQRSNNRIIRPSADYVGVSPRKVIPIANR.

2 residues coordinate substrate: Lys-72 and His-187. His-222 is an active-site residue. 255–259 lines the CoA pocket; the sequence is KIMGF. Residue His-261 is part of the active site. Arg-270 contacts substrate. Asp-312 is a catalytic residue. Residues Arg-337 and Arg-356 each coordinate substrate.

The protein belongs to the citrate synthase family. As to quaternary structure, homodimer.

The enzyme catalyses propanoyl-CoA + oxaloacetate + H2O = (2S,3S)-2-methylcitrate + CoA + H(+). It carries out the reaction oxaloacetate + acetyl-CoA + H2O = citrate + CoA + H(+). It functions in the pathway organic acid metabolism; propanoate degradation. The protein operates within carbohydrate metabolism; tricarboxylic acid cycle; isocitrate from oxaloacetate: step 1/2. Involved in the catabolism of short chain fatty acids (SCFA) via the tricarboxylic acid (TCA)(acetyl degradation route) and via the 2-methylcitrate cycle II (propionate degradation route). Catalyzes the Claisen condensation of propionyl-CoA and oxaloacetate (OAA) to yield 2-methylcitrate (2-MC) and CoA. Catalyzes the condensation of oxaloacetate with acetyl-CoA. The sequence is that of 2-methylcitrate synthase (prpC) from Shewanella oneidensis (strain ATCC 700550 / JCM 31522 / CIP 106686 / LMG 19005 / NCIMB 14063 / MR-1).